The primary structure comprises 222 residues: Putative ankyrin repeat protein L36 (222 aa).

ANK repeat units lie at residues 1–14 (MVKY…NVDA), 15–44 (QNSR…NIYA), 45–74 (NDNH…NIRA), 76–104 (EDSA…TNYE), 105–134 (YSDY…KITD), 136–161 (AMFM…SLPC), and 163–191 (SYSE…KINK).

The protein is Putative ankyrin repeat protein L36 of Acanthamoeba polyphaga (Amoeba).